Reading from the N-terminus, the 330-residue chain is tRNA-modifying protein YgfZ (330 aa).

Folate contacts are provided by Trp28 and Trp190.

This sequence belongs to the tRNA-modifying YgfZ family.

Its subcellular location is the cytoplasm. Its function is as follows. Folate-binding protein involved in regulating the level of ATP-DnaA and in the modification of some tRNAs. It is probably a key factor in regulatory networks that act via tRNA modification, such as initiation of chromosomal replication. The protein is tRNA-modifying protein YgfZ of Yersinia pseudotuberculosis serotype O:1b (strain IP 31758).